The following is a 139-amino-acid chain: Actin-depolymerizing factor 3 (139 aa).

The ADF-H domain maps to 7–139 (GVAVNDECML…SLDEIKDRAR (133 aa)).

The protein belongs to the actin-binding proteins ADF family. Expressed in all tissues except pollen.

Its subcellular location is the cytoplasm. Actin-depolymerizing protein. Severs actin filaments (F-actin) and binds to actin monomers. The polypeptide is Actin-depolymerizing factor 3 (ADF3) (Zea mays (Maize)).